Consider the following 473-residue polypeptide: Bifunctional protein GlmU (473 aa).

A pyrophosphorylase region spans residues 1-241 (MATQPTPLTA…VGSLVGINDR (241 aa)). UDP-N-acetyl-alpha-D-glucosamine-binding positions include 13–16 (LAAG), Lys-27, Gln-84, and 89–90 (GT). Residue Asp-114 participates in Mg(2+) binding. UDP-N-acetyl-alpha-D-glucosamine is bound by residues Gly-152, Glu-167, Asn-182, and Asn-239. Asn-239 contributes to the Mg(2+) binding site. Residues 242 to 262 (AQLAAAEEVLYGRIADRLRKS) are linker. The tract at residues 263–473 (GVTIRTSARI…KARLKDAAKK (211 aa)) is N-acetyltransferase. UDP-N-acetyl-alpha-D-glucosamine is bound by residues Arg-343 and Lys-361. Catalysis depends on His-373, which acts as the Proton acceptor. UDP-N-acetyl-alpha-D-glucosamine contacts are provided by Tyr-376 and Asn-387. Residues Ala-390, 396–397 (NY), Ser-415, Thr-433, and Arg-450 each bind acetyl-CoA.

It in the N-terminal section; belongs to the N-acetylglucosamine-1-phosphate uridyltransferase family. The protein in the C-terminal section; belongs to the transferase hexapeptide repeat family. Homotrimer. Requires Mg(2+) as cofactor.

It localises to the cytoplasm. The catalysed reaction is alpha-D-glucosamine 1-phosphate + acetyl-CoA = N-acetyl-alpha-D-glucosamine 1-phosphate + CoA + H(+). The enzyme catalyses N-acetyl-alpha-D-glucosamine 1-phosphate + UTP + H(+) = UDP-N-acetyl-alpha-D-glucosamine + diphosphate. It participates in nucleotide-sugar biosynthesis; UDP-N-acetyl-alpha-D-glucosamine biosynthesis; N-acetyl-alpha-D-glucosamine 1-phosphate from alpha-D-glucosamine 6-phosphate (route II): step 2/2. Its pathway is nucleotide-sugar biosynthesis; UDP-N-acetyl-alpha-D-glucosamine biosynthesis; UDP-N-acetyl-alpha-D-glucosamine from N-acetyl-alpha-D-glucosamine 1-phosphate: step 1/1. The protein operates within bacterial outer membrane biogenesis; LPS lipid A biosynthesis. Its function is as follows. Catalyzes the last two sequential reactions in the de novo biosynthetic pathway for UDP-N-acetylglucosamine (UDP-GlcNAc). The C-terminal domain catalyzes the transfer of acetyl group from acetyl coenzyme A to glucosamine-1-phosphate (GlcN-1-P) to produce N-acetylglucosamine-1-phosphate (GlcNAc-1-P), which is converted into UDP-GlcNAc by the transfer of uridine 5-monophosphate (from uridine 5-triphosphate), a reaction catalyzed by the N-terminal domain. This Sorangium cellulosum (strain So ce56) (Polyangium cellulosum (strain So ce56)) protein is Bifunctional protein GlmU.